A 334-amino-acid chain; its full sequence is MDERLVSSELDNHESAIEQSLRPQRLAQYIGQEKVKDNLKVFIEAAKMREETLDHVLLYGPPGLGKTTLAAIIANEMGVNLRTTSGPAIERPGDLAAILTALEPGDVLFIDEIHRLHRSIEEVLYPAMEDFCLDIVIGKGPSARSVRLDLPPFTLVGATTRVGLLTAPLRDRFGVLSRLEYYTRDELSEIVIRTAELFEVDIDSLSALEIARRSRGTPRIANRLLRRVRDFAQVLGNSSITEEVAVDALERLQVDKLGLDHIDRKLLMGMIEKFGGGPVGIDTISATIGEESHTIEDVYEPYLLQIGFIQRTPRGRIVTPDVYSHFKMEVPNHD.

A large ATPase domain (RuvB-L) region spans residues 1-182; it reads MDERLVSSEL…FGVLSRLEYY (182 aa). ATP is bound by residues L21, R22, G63, K66, T67, T68, 129 to 131, R172, Y182, and R219; that span reads EDF. T67 contributes to the Mg(2+) binding site. Residues 183–253 form a small ATPAse domain (RuvB-S) region; the sequence is TRDELSEIVI…VAVDALERLQ (71 aa). The head domain (RuvB-H) stretch occupies residues 256–334; it reads KLGLDHIDRK…HFKMEVPNHD (79 aa). The DNA site is built by R311 and R316.

It belongs to the RuvB family. In terms of assembly, homohexamer. Forms an RuvA(8)-RuvB(12)-Holliday junction (HJ) complex. HJ DNA is sandwiched between 2 RuvA tetramers; dsDNA enters through RuvA and exits via RuvB. An RuvB hexamer assembles on each DNA strand where it exits the tetramer. Each RuvB hexamer is contacted by two RuvA subunits (via domain III) on 2 adjacent RuvB subunits; this complex drives branch migration. In the full resolvosome a probable DNA-RuvA(4)-RuvB(12)-RuvC(2) complex forms which resolves the HJ.

Its subcellular location is the cytoplasm. It carries out the reaction ATP + H2O = ADP + phosphate + H(+). The RuvA-RuvB-RuvC complex processes Holliday junction (HJ) DNA during genetic recombination and DNA repair, while the RuvA-RuvB complex plays an important role in the rescue of blocked DNA replication forks via replication fork reversal (RFR). RuvA specifically binds to HJ cruciform DNA, conferring on it an open structure. The RuvB hexamer acts as an ATP-dependent pump, pulling dsDNA into and through the RuvAB complex. RuvB forms 2 homohexamers on either side of HJ DNA bound by 1 or 2 RuvA tetramers; 4 subunits per hexamer contact DNA at a time. Coordinated motions by a converter formed by DNA-disengaged RuvB subunits stimulates ATP hydrolysis and nucleotide exchange. Immobilization of the converter enables RuvB to convert the ATP-contained energy into a lever motion, pulling 2 nucleotides of DNA out of the RuvA tetramer per ATP hydrolyzed, thus driving DNA branch migration. The RuvB motors rotate together with the DNA substrate, which together with the progressing nucleotide cycle form the mechanistic basis for DNA recombination by continuous HJ branch migration. Branch migration allows RuvC to scan DNA until it finds its consensus sequence, where it cleaves and resolves cruciform DNA. This is Holliday junction branch migration complex subunit RuvB from Bacillus licheniformis (strain ATCC 14580 / DSM 13 / JCM 2505 / CCUG 7422 / NBRC 12200 / NCIMB 9375 / NCTC 10341 / NRRL NRS-1264 / Gibson 46).